The chain runs to 290 residues: 2-dehydro-3-deoxy-phosphogluconate/2-dehydro-3-deoxy-6-phosphogalactonate aldolase (290 aa).

Residues 42–43 (TT), 129–131 (YNY), and 155–157 (KDT) each bind substrate. Lys-155 (schiff-base intermediate with substrate) is an active-site residue.

This sequence belongs to the DapA family. KDPG aldolase subfamily. As to quaternary structure, homotetramer; dimer of dimers.

The catalysed reaction is 2-dehydro-3-deoxy-6-phospho-D-gluconate = D-glyceraldehyde 3-phosphate + pyruvate. It carries out the reaction 2-dehydro-3-deoxy-6-phospho-D-galactonate = D-glyceraldehyde 3-phosphate + pyruvate. The protein operates within carbohydrate acid metabolism; 2-dehydro-3-deoxy-D-gluconate degradation; D-glyceraldehyde 3-phosphate and pyruvate from 2-dehydro-3-deoxy-D-gluconate: step 2/2. In terms of biological role, involved in the degradation of glucose and galactose via the Entner-Doudoroff pathway. Catalyzes the reversible cleavage of 2-keto-3-deoxy-6-phosphogluconate (KDPG) and 2-keto-3-deoxygluconate (KDG) forming pyruvate and glyceraldehyde 3-phosphate or glyceraldehyde, respectively. It is also able to catalyze the reversible cleavage of 2-keto-3-deoxy-6-phosphogalactonate (KDPGal) and 2-keto-3-deoxygalactonate (KDGal). The polypeptide is 2-dehydro-3-deoxy-phosphogluconate/2-dehydro-3-deoxy-6-phosphogalactonate aldolase (kdgA) (Sulfurisphaera tokodaii (strain DSM 16993 / JCM 10545 / NBRC 100140 / 7) (Sulfolobus tokodaii)).